Here is a 763-residue protein sequence, read N- to C-terminus: Thiamine biosynthesis multifunctional protein ThiED (763 aa).

The thiamine-phosphate synthase stretch occupies residues methionine 1–leucine 210. 4-amino-2-methyl-5-(diphosphooxymethyl)pyrimidine-binding positions include glutamine 37–lysine 41 and asparagine 69. Residues aspartate 70 and aspartate 88 each coordinate Mg(2+). Serine 107 contributes to the 4-amino-2-methyl-5-(diphosphooxymethyl)pyrimidine binding site. Position 140 to 142 (threonine 140 to threonine 142) interacts with 2-[(2R,5Z)-2-carboxy-4-methylthiazol-5(2H)-ylidene]ethyl phosphate. Residue lysine 143 coordinates 4-amino-2-methyl-5-(diphosphooxymethyl)pyrimidine. 2-[(2R,5Z)-2-carboxy-4-methylthiazol-5(2H)-ylidene]ethyl phosphate-binding positions include glycine 174 and valine 194–serine 195. The hydroxymethylpyrimidine/phosphomethylpyrimidine kinase stretch occupies residues leucine 245–glycine 500. Glutamine 282 is a 4-amino-5-hydroxymethyl-2-methylpyrimidine binding site. Positions phenylalanine 550 to serine 763 are thiaminase-2.

The protein in the N-terminal section; belongs to the thiamine-phosphate synthase family. In the central section; belongs to the ThiD family. This sequence in the C-terminal section; belongs to the thiaminase-2 family. Requires Mg(2+) as cofactor.

The catalysed reaction is 2-[(2R,5Z)-2-carboxy-4-methylthiazol-5(2H)-ylidene]ethyl phosphate + 4-amino-2-methyl-5-(diphosphooxymethyl)pyrimidine + 2 H(+) = thiamine phosphate + CO2 + diphosphate. The enzyme catalyses 2-(2-carboxy-4-methylthiazol-5-yl)ethyl phosphate + 4-amino-2-methyl-5-(diphosphooxymethyl)pyrimidine + 2 H(+) = thiamine phosphate + CO2 + diphosphate. It catalyses the reaction 4-methyl-5-(2-phosphooxyethyl)-thiazole + 4-amino-2-methyl-5-(diphosphooxymethyl)pyrimidine + H(+) = thiamine phosphate + diphosphate. It carries out the reaction 4-amino-5-hydroxymethyl-2-methylpyrimidine + ATP = 4-amino-2-methyl-5-(phosphooxymethyl)pyrimidine + ADP + H(+). The catalysed reaction is 4-amino-2-methyl-5-(phosphooxymethyl)pyrimidine + ATP = 4-amino-2-methyl-5-(diphosphooxymethyl)pyrimidine + ADP. It functions in the pathway cofactor biosynthesis; thiamine diphosphate biosynthesis; 4-amino-2-methyl-5-diphosphomethylpyrimidine from 5-amino-1-(5-phospho-D-ribosyl)imidazole: step 3/3. The protein operates within cofactor biosynthesis; thiamine diphosphate biosynthesis; thiamine phosphate from 4-amino-2-methyl-5-diphosphomethylpyrimidine and 4-methyl-5-(2-phosphoethyl)-thiazole: step 1/1. In terms of biological role, condenses 4-methyl-5-(beta-hydroxyethyl)thiazole monophosphate (THZ-P) and 2-methyl-4-amino-5-hydroxymethyl pyrimidine pyrophosphate (HMP-PP) to form thiamine monophosphate (TMP). Functionally, catalyzes the phosphorylation of hydroxymethylpyrimidine phosphate (HMP-P) to HMP-PP, and of HMP to HMP-P. The sequence is that of Thiamine biosynthesis multifunctional protein ThiED (theD) from Corynebacterium glutamicum (strain ATCC 13032 / DSM 20300 / JCM 1318 / BCRC 11384 / CCUG 27702 / LMG 3730 / NBRC 12168 / NCIMB 10025 / NRRL B-2784 / 534).